Consider the following 241-residue polypeptide: Uridylate kinase (241 aa).

ATP is bound at residue 12 to 15 (KLSG). Residue G54 participates in UMP binding. 2 residues coordinate ATP: G55 and R59. Residues D74 and 135 to 142 (VGAPYFTT) each bind UMP. The ATP site is built by T162, Y168, and D171.

This sequence belongs to the UMP kinase family. Homohexamer.

The protein resides in the cytoplasm. It carries out the reaction UMP + ATP = UDP + ADP. The protein operates within pyrimidine metabolism; CTP biosynthesis via de novo pathway; UDP from UMP (UMPK route): step 1/1. With respect to regulation, inhibited by UTP. Its function is as follows. Catalyzes the reversible phosphorylation of UMP to UDP. This chain is Uridylate kinase, found in Sphingopyxis alaskensis (strain DSM 13593 / LMG 18877 / RB2256) (Sphingomonas alaskensis).